A 461-amino-acid polypeptide reads, in one-letter code: Elongation factor 1-alpha (461 aa).

A N,N,N-trimethylglycine modification is found at G2. At K3 the chain carries N6,N6-dimethyllysine; alternate. Position 3 is an N6-methyllysine; alternate (K3). The 236-residue stretch at 6-241 (KTHINVVVIG…DSIEPPKRPT (236 aa)) folds into the tr-type G domain. The tract at residues 15–22 (GHVDSGKS) is G1. 15 to 22 (GHVDSGKS) is a GTP binding site. K31 carries the N6-methyllysine modification. The tract at residues 71-75 (GITID) is G2. The residue at position 80 (K80) is an N6,N6,N6-trimethyllysine. The interval 92–95 (DAPG) is G3. GTP-binding positions include 92–96 (DAPGH) and 154–157 (NKMD). The segment at 154-157 (NKMD) is G4. The interval 193–195 (SGF) is G5. K317 is modified (N6,N6-dimethyllysine; alternate). K317 carries the post-translational modification N6-methyllysine; alternate. An N6-methyllysine modification is found at K391.

Belongs to the TRAFAC class translation factor GTPase superfamily. Classic translation factor GTPase family. EF-Tu/EF-1A subfamily.

The protein resides in the cytoplasm. Functionally, this protein promotes the GTP-dependent binding of aminoacyl-tRNA to the A-site of ribosomes during protein biosynthesis. The polypeptide is Elongation factor 1-alpha (TEF) (Pseudoechria curvicolla (Podospora curvicolla)).